Consider the following 510-residue polypeptide: Nectin-4 (510 aa).

The N-terminal stretch at 1-31 is a signal peptide; sequence MPLSLGAEMWGPEAWLLLLLLLASFTGRCPA. One can recognise an Ig-like V-type domain in the interval 32 to 144; the sequence is GELETSDVVT…GSFQARLRLR (113 aa). The Extracellular portion of the chain corresponds to 32 to 349; the sequence is GELETSDVVT…GKQVDLVSAS (318 aa). Disulfide bonds link Cys52–Cys127, Cys171–Cys223, and Cys270–Cys315. 2 consecutive Ig-like C2-type domains span residues 148–237 and 248–331; these read PPLP…QRIT and ASVR…VTVD. A glycan (N-linked (GlcNAc...) asparagine) is linked at Asn281. The chain crosses the membrane as a helical span at residues 350–370; the sequence is VVVVGVIAALLFCLLVVVVVL. The Cytoplasmic portion of the chain corresponds to 371–510; it reads MSRYHRRKAQ…IYINGRGHLV (140 aa). Over residues 399–412 the composition is skewed to basic and acidic residues; the sequence is RRLHSHHTDPRSQP. 2 disordered regions span residues 399–447 and 457–476; these read RRLH…SYST and QTEL…DQDE.

This sequence belongs to the nectin family. In terms of assembly, self-associates. Interacts via its Ig-like V-type domain with NECTIN1 Ig-like V-type domain. Interacts via its C-terminus with AFDN. As to quaternary structure, (Microbial infection) Interacts (via N-terminus) with measles virus hemagglutinin protein. In terms of processing, the soluble form is produced by proteolytic cleavage at the cell surface (shedding), probably by ADAM17/TACE. As to expression, predominantly expressed in placenta. Not detected in normal breast epithelium but expressed in breast carcinoma.

It localises to the cell membrane. The protein localises to the cell junction. The protein resides in the adherens junction. Its subcellular location is the secreted. In terms of biological role, seems to be involved in cell adhesion through trans-homophilic and -heterophilic interactions, the latter including specifically interactions with NECTIN1. Does not act as receptor for alpha-herpesvirus entry into cells. (Microbial infection) Acts as a receptor for measles virus. This chain is Nectin-4, found in Homo sapiens (Human).